Consider the following 918-residue polypeptide: Exostosin-like 3 (918 aa).

Over 1-30 the chain is Cytoplasmic; the sequence is MTGYTMLRNGGVGNGGQTCMLRWSNRIRLT. Residues 1–140 are required for interaction with REG3A; the sequence is MTGYTMLRNG…LKNVISQTEH (140 aa). A helical; Signal-anchor for type II membrane protein membrane pass occupies residues 31-51; it reads WLSFTLFIILVFFPLIAHYYL. Over 52-918 the chain is Lumenal; it reads TTLDEADEAG…HDKTKCFKFI (867 aa). 2 disulfides stabilise this stretch: Cys177–Cys182 and Cys188–Cys236. Asn290 carries N-linked (GlcNAc...) asparagine glycosylation. Ser361 is subject to Phosphoserine. Cys399 and Cys414 form a disulfide bridge. Asn591 carries N-linked (GlcNAc...) asparagine glycosylation. Leu667, Arg671, Asn696, Asn722, Arg727, Asp743, Asp744, and Asp745 together coordinate UDP-N-acetyl-alpha-D-glucosamine. Asp745 is a binding site for Mn(2+). Asn789 carries an N-linked (GlcNAc...) asparagine glycan. Cys830 and Cys878 are joined by a disulfide. UDP-N-acetyl-alpha-D-glucosamine is bound by residues Glu831, Asp832, and Arg875. Asp832 is an active-site residue.

This sequence belongs to the glycosyltransferase 47 family. In terms of assembly, homodimer; disulfide-linked. Interacts with REG3A. It depends on Mn(2+) as a cofactor. As to expression, expressed in pancreatic islet beta-cells. Expressed in lung epithelial cells. Expressed in microglia.

The protein localises to the endoplasmic reticulum membrane. It is found in the golgi apparatus. The protein resides in the cell membrane. Its subcellular location is the nucleus. The catalysed reaction is 3-O-(beta-D-GlcA-(1-&gt;3)-beta-D-Gal-(1-&gt;3)-beta-D-Gal-(1-&gt;4)-beta-D-Xyl)-L-seryl-[protein] + UDP-N-acetyl-alpha-D-glucosamine = 3-O-(alpha-D-GlcNAc-(1-&gt;4)-beta-D-GlcA-(1-&gt;3)-beta-D-Gal-(1-&gt;3)-beta-D-Gal-(1-&gt;4)-beta-D-Xyl)-L-seryl-[protein] + UDP + H(+). It functions in the pathway glycan metabolism; heparan sulfate biosynthesis. Functionally, glycosyltransferase which regulates the biosynthesis of heparan sulfate (HS). Initiates HS synthesis by transferring the first N-acetyl-alpha-D-glucosamine (alpha-GlcNAc) residue (GlcNAcT-I activity) to the tetrasaccharide linker (GlcA-Gal-Gal-Xyl-)Ser core linker. May also transfer alpha-GlcNAc residues during HS elongation (GlcNAcT-II activity). Lacks glucuronyl transferase II (GlcAT-II) activity. Important for both skeletal development and hematopoiesis, through the formation of HS proteoglycans (HSPGs). Through the synthesis of HS, regulates postnatal pancreatic islet maturation and insulin secretion. In terms of biological role, receptor for REG3A, REG3B and REG3G, induces the activation of downstream signaling pathways such as PI3K-AKT or RAS-RAF-MEK-ERK signaling pathway. Required for the function of REG3A in regulating keratinocyte proliferation and differentiation. Required for the inhibition of skin inflammation mediated by REG3A through the activation of PI3K-AKT-STAT3 pathway. Required for the function of REG3A and REG3G in glucose tolerance in pancreas. Expressed in microglia, is activated by nociceptor-derived REG3G in response to endotoxins, leading to the inhibition of kynurenine pathway to prevent endotoxic death. In Mus musculus (Mouse), this protein is Exostosin-like 3.